A 399-amino-acid chain; its full sequence is uncharacterized protein (399 aa).

Helical transmembrane passes span 46 to 66 (IAPYLITLTGTITILLSFFIV), 76 to 95 (TLPRWVYAMSGLTLFFYQTM), 139 to 159 (GVGYISLIQLFITALLPFWMA), 181 to 201 (IIIIVCALLSTAIFGNAFWTF), 226 to 246 (LMLNEIIVASLSLPCLITCFF), 262 to 282 (ILPALKHILVWVIITVSSFIW), 303 to 323 (VQFSIGIIFGELVSRLILAHM), 330 to 350 (IIQAPLYPLILSTFCSTINYF), and 352 to 372 (GTIIIPENLLLILFTVTSFVH).

This sequence belongs to the CDP-alcohol phosphatidyltransferase class-I family.

Its subcellular location is the membrane. This is an uncharacterized protein from Dictyostelium discoideum (Social amoeba).